The following is an 827-amino-acid chain: Putative potassium transporter 12 (827 aa).

Residues 1–31 (MEEIEEGSSNNSIRRVGTGSSDRRWVDGSEV) are disordered. Residues 1 to 82 (MEEIEEGSSN…AGSHGHNLKD (82 aa)) lie on the Cytoplasmic side of the membrane. A helical membrane pass occupies residues 83 to 103 (LSLLTTLGIAFQTLGVVYGDM). Residues 104-129 (GTSPLYVFSDVFSKVPIRSEVDVLGA) are Extracellular-facing. Residues 130-150 (LSLVIYTIAVIPLAKYVFVVL) form a helical membrane-spanning segment. The Cytoplasmic portion of the chain corresponds to 151–216 (KANDNGEGGT…ALETKGYLKT (66 aa)). The helical transmembrane segment at 217–237 (LLLLLVLMGTSMIIGDGILTP) threads the bilayer. Over 238–253 (AMSVMSAMSGLQGEVK) the chain is Extracellular. Residues 254–274 (GFGTNALVMSSIVILVALFSI) traverse the membrane as a helical segment. Topologically, residues 275–281 (QRFGTGK) are cytoplasmic. Residues 282–302 (VGFLFAPVLALWFFSLGAIGI) traverse the membrane as a helical segment. The Extracellular portion of the chain corresponds to 303-335 (YNLLKYDFTVIRALNPFYIVLFFNKNSKQAWSA). The chain crosses the membrane as a helical span at residues 336-356 (LGGCVLCITGAEAMFADLGHF). Residues 357–363 (SVRSIQM) are Cytoplasmic-facing. The helical transmembrane segment at 364-384 (AFTCVVFPCLLLAYMGQAAYL) threads the bilayer. Over 385–402 (TKHPEASARIFYDSVPKS) the chain is Extracellular. A helical membrane pass occupies residues 403–423 (LFWPVFVIATLAAMIASQAMI). The Cytoplasmic portion of the chain corresponds to 424–454 (SATFSCVKQAMALGCFPRLKIIHTSKKRIGQ). Residues 455 to 475 (IYIPVINWFLMIMCILVVSIF) form a helical membrane-spanning segment. Residues 476-480 (RSTTH) lie on the Extracellular side of the membrane. A run of 2 helical transmembrane segments spans residues 481-501 (IANAYGIAEVGVMMVSTVLVT) and 502-522 (LVMLLIWQTNIFLALCFPLIF). The Extracellular segment spans residues 523–536 (GSVETIYLLAVLTK). A helical transmembrane segment spans residues 537 to 557 (ILEGGWVPLVFATFFLTVMYI). Over 558-827 (WNYGSVLKYQ…ILQAGMTYMV (270 aa)) the chain is Cytoplasmic. Residues 728–750 (RSEPEQELDSEVLPSSSVGSSME) are disordered. The span at 738 to 748 (EVLPSSSVGSS) shows a compositional bias: low complexity.

It belongs to the HAK/KUP transporter (TC 2.A.72.3) family.

It is found in the cell membrane. Putative potassium transporter. The chain is Putative potassium transporter 12 (POT12) from Arabidopsis thaliana (Mouse-ear cress).